We begin with the raw amino-acid sequence, 103 residues long: UPF0145 protein BCE33L0904 (103 aa).

Belongs to the UPF0145 family.

This chain is UPF0145 protein BCE33L0904, found in Bacillus cereus (strain ZK / E33L).